The chain runs to 490 residues: Aspartyl/glutamyl-tRNA(Asn/Gln) amidotransferase subunit B (490 aa).

The protein belongs to the GatB/GatE family. GatB subfamily. In terms of assembly, heterotrimer of A, B and C subunits.

It carries out the reaction L-glutamyl-tRNA(Gln) + L-glutamine + ATP + H2O = L-glutaminyl-tRNA(Gln) + L-glutamate + ADP + phosphate + H(+). The catalysed reaction is L-aspartyl-tRNA(Asn) + L-glutamine + ATP + H2O = L-asparaginyl-tRNA(Asn) + L-glutamate + ADP + phosphate + 2 H(+). In terms of biological role, allows the formation of correctly charged Asn-tRNA(Asn) or Gln-tRNA(Gln) through the transamidation of misacylated Asp-tRNA(Asn) or Glu-tRNA(Gln) in organisms which lack either or both of asparaginyl-tRNA or glutaminyl-tRNA synthetases. The reaction takes place in the presence of glutamine and ATP through an activated phospho-Asp-tRNA(Asn) or phospho-Glu-tRNA(Gln). The sequence is that of Aspartyl/glutamyl-tRNA(Asn/Gln) amidotransferase subunit B from Burkholderia mallei (strain NCTC 10247).